Reading from the N-terminus, the 503-residue chain is Phenylalanine--tRNA ligase alpha subunit (503 aa).

Serine 2 carries the N-acetylserine modification. Positions 2–173 (SDFQLEILKK…KRKLIAQGKI (172 aa)) are contains the major tRNA-Phe binding sites. L-phenylalanine is bound by residues threonine 333, 374 to 376 (QVE), and tyrosine 414. Glutamate 416 lines the Mg(2+) pocket. Phenylalanine 440 is an L-phenylalanine binding site.

It belongs to the class-II aminoacyl-tRNA synthetase family. Phe-tRNA synthetase alpha subunit type 2 subfamily. As to quaternary structure, tetramer of two alpha and two beta subunits. The cofactor is Mg(2+).

The protein resides in the cytoplasm. It carries out the reaction tRNA(Phe) + L-phenylalanine + ATP = L-phenylalanyl-tRNA(Phe) + AMP + diphosphate + H(+). This Saccharomyces cerevisiae (strain ATCC 204508 / S288c) (Baker's yeast) protein is Phenylalanine--tRNA ligase alpha subunit (FRS2).